Consider the following 312-residue polypeptide: Dihydroorotate dehydrogenase B (NAD(+)), catalytic subunit (312 aa).

Residues Ser23 and 47–48 each bind FMN; that span reads KA. Residues Lys47 and 71 to 75 contribute to the substrate site; that span reads NAIGL. FMN-binding residues include Asn102 and Asn130. Asn130 lines the substrate pocket. Cys133 serves as the catalytic Nucleophile. Residues Lys168 and Ile194 each contribute to the FMN site. 195–196 lines the substrate pocket; sequence NT. FMN contacts are provided by residues Gly220, 246–247, and 268–269; these read GG and GT.

The protein belongs to the dihydroorotate dehydrogenase family. Type 1 subfamily. In terms of assembly, heterotetramer of 2 PyrK and 2 PyrD type B subunits. The cofactor is FMN.

The protein resides in the cytoplasm. The catalysed reaction is (S)-dihydroorotate + NAD(+) = orotate + NADH + H(+). It participates in pyrimidine metabolism; UMP biosynthesis via de novo pathway; orotate from (S)-dihydroorotate (NAD(+) route): step 1/1. Catalyzes the conversion of dihydroorotate to orotate with NAD(+) as electron acceptor. The sequence is that of Dihydroorotate dehydrogenase B (NAD(+)), catalytic subunit (pyrDB) from Enterococcus faecalis (strain ATCC 700802 / V583).